A 326-amino-acid polypeptide reads, in one-letter code: ELMO domain-containing protein 1 (326 aa).

Residues 133–306 (QHEEMLLKLW…KFRKRIIKQL (174 aa)) form the ELMO domain.

Functionally, acts as a GTPase-activating protein (GAP) toward guanine nucleotide exchange factors like ARL2, ARL3, ARF1 and ARF6, but not for GTPases outside the Arf family. The chain is ELMO domain-containing protein 1 (Elmod1) from Mus musculus (Mouse).